A 424-amino-acid polypeptide reads, in one-letter code: Protein TUNICAMYCIN INDUCED 1 (424 aa).

An N-terminal signal peptide occupies residues 1 to 25 (MGHRVLVYVGALFLILFTIFPSSSA). Residues asparagine 197, asparagine 296, and asparagine 406 are each glycosylated (N-linked (GlcNAc...) asparagine).

As to expression, restricted to pollen grains at high levels.

Its subcellular location is the endoplasmic reticulum. In terms of biological role, involved in the regulation of pollen surface morphology, probably by modulating the secretion of proteins and/or lipids during pollen development. This Arabidopsis thaliana (Mouse-ear cress) protein is Protein TUNICAMYCIN INDUCED 1.